A 662-amino-acid chain; its full sequence is Transketolase (662 aa).

His28 is a binding site for substrate. Thiamine diphosphate contacts are provided by residues His68 and 115 to 117; that span reads GPL. Asp156 serves as a coordination point for Mg(2+). The thiamine diphosphate site is built by Gly157 and Asn186. Mg(2+) contacts are provided by Asn186 and Ile188. Substrate contacts are provided by His261, Arg356, and Ser383. A thiamine diphosphate-binding site is contributed by His261. The active-site Proton donor is the Glu410. A thiamine diphosphate-binding site is contributed by Phe436. Residues His460, Asp468, and Arg519 each contribute to the substrate site.

It belongs to the transketolase family. Homodimer. The cofactor is Mg(2+). Ca(2+) serves as cofactor. It depends on Mn(2+) as a cofactor. Requires Co(2+) as cofactor. Thiamine diphosphate is required as a cofactor.

The enzyme catalyses D-sedoheptulose 7-phosphate + D-glyceraldehyde 3-phosphate = aldehydo-D-ribose 5-phosphate + D-xylulose 5-phosphate. Its pathway is carbohydrate biosynthesis; Calvin cycle. It functions in the pathway carbohydrate degradation; pentose phosphate pathway. In terms of biological role, catalyzes the transfer of a two-carbon ketol group from a ketose donor to an aldose acceptor, via a covalent intermediate with the cofactor thiamine pyrophosphate. This Staphylococcus epidermidis (strain ATCC 35984 / DSM 28319 / BCRC 17069 / CCUG 31568 / BM 3577 / RP62A) protein is Transketolase (tkt).